The chain runs to 332 residues: Glycerol-3-phosphate dehydrogenase [NAD(P)+] (332 aa).

The NADPH site is built by Trp11, Arg30, and Lys108. Sn-glycerol 3-phosphate is bound by residues Lys108, Gly137, and Ser139. Residue Ala141 coordinates NADPH. 5 residues coordinate sn-glycerol 3-phosphate: Lys192, Asp245, Ser255, Arg256, and Asn257. Catalysis depends on Lys192, which acts as the Proton acceptor. Arg256 contacts NADPH. Residues Val280 and Glu282 each coordinate NADPH.

It belongs to the NAD-dependent glycerol-3-phosphate dehydrogenase family.

It is found in the cytoplasm. It carries out the reaction sn-glycerol 3-phosphate + NAD(+) = dihydroxyacetone phosphate + NADH + H(+). It catalyses the reaction sn-glycerol 3-phosphate + NADP(+) = dihydroxyacetone phosphate + NADPH + H(+). The protein operates within membrane lipid metabolism; glycerophospholipid metabolism. In terms of biological role, catalyzes the reduction of the glycolytic intermediate dihydroxyacetone phosphate (DHAP) to sn-glycerol 3-phosphate (G3P), the key precursor for phospholipid synthesis. This is Glycerol-3-phosphate dehydrogenase [NAD(P)+] from Burkholderia mallei (strain ATCC 23344).